Consider the following 1336-residue polypeptide: MVSRSSETSEGPPPPSKIPGTPAKTRLSRLNSSPAKQDKPKDDRVVKSSAKDVAELKDYQLGDCLGKGAFGSVYRALNWNTGETVAVKQIKLVDLPKSELRVIMLEIDLLKNLDHPNIVKYQGFVKSAETLNIILEYCENGSLHSIAKNFGRFPENLVGLYMSQVLHGLLYLHEQGVIHRDIKGANILTTKEGLVKLADFGVASRTTGLSESSVVGTPYWMAPEVIELSGATTASDIWSLGCTVIELLEGKPPYYNLQPMPALFRIVNDDHPPLPQGASPAVKDFLMQCFQKDPNLRVSARKLLKHPWIVNARRSDSVVPKKSTEYEEAVKSVQEWNEALRSPDTGTLRKPYRYDAQGAALRPEMAPSRYTPTKDILPSPVSKHVTDRFRSPDSTEEDNWDDDFATAISPSALQLPHLRPQDNFGGMLSSEKLKAFASLDGTVLKSEDGFDDFDDPFSQQPGESDPLRTIRPYSAKPTGMENMSQQTKPTIAAMHHNVPVLKTPVPPLRPQRPTSYFKENSVEDYSDLISANEDILDDKLSAFQDIDEEGSDISIPSPSKEVVRYQASPDHDEDHQPQLRKRISVKRHRSAIEIQKFAENERDEDFSDILGADEVALDKPESDEGSDRSTLMLNSKLSNNSWLGDQDDEDDPFAQLEEGLDEVDLEANIARDKYARLRGQVEGLVSSLKTSQDEDVLGEISEQLLTVFCDLPETKNIIISAHGMLPILEILDICRRRDIILCLLRIVNAIIFNDYEIQENLCFVGGIPIINEFASKKYPREIRLEAAAFVQQMYQTSTLTLQMFVSAGGLNVLVEFLEDDYEDERDLVLIGVNGIWSVFDLQGSTPKNDFCRILSRNSVLDPLSLVLSRVLDEEGELAEIVEGRIANIFFIFSQAENHVKEMVAERTVLHRVLKELKRMTPAHQITMLKFIKNLSMLSTTLDSLQNSNAIDVLTDLLRSTIKRPHFREVSNQILNTIYNMCRLNKSRQEDAALNGIVPLLQKIVKTERPLKEFALPILCDMAHSGKVGRRELWRNKGLAFYISLLSDPYWQVTALDAIFTWLQEETAKVEEHLLDNRYDKMSFTDSIVRCLTISKANAFENILEPLQKLLRLSPPIASTFARPDLFTRLGQKLHHNKAAVRLNLLRIISSICDSSEEQGGLLAKYGLLEAIRELEHDPAILVRDMAGKLIQSNERSESFSLEKRKPGMRRKSTSTTPPGYLANQSAPATPQINRFNQPKAYFDGRESQRHPRPSLSSSALALRPGSRDGTGPSLSAGLSSSAGPSRNRLSRGVANRLSQVELLAEEETRPSSSLSRRRSILPQRRRPTHADSDWAS.

A compositionally biased stretch (low complexity) spans 1–10 (MVSRSSETSE). The segment at 1–46 (MVSRSSETSEGPPPPSKIPGTPAKTRLSRLNSSPAKQDKPKDDRVV) is disordered. Over residues 36–46 (KQDKPKDDRVV) the composition is skewed to basic and acidic residues. Residues 59 to 309 (YQLGDCLGKG…ARKLLKHPWI (251 aa)) form the Protein kinase domain. Residues 65-73 (LGKGAFGSV) and Lys88 contribute to the ATP site. The active-site Proton acceptor is the Asp181. Residues 368–402 (SRYTPTKDILPSPVSKHVTDRFRSPDSTEEDNWDD) form a disordered region. Over residues 384 to 393 (HVTDRFRSPD) the composition is skewed to basic and acidic residues. A coiled-coil region spans residues 654 to 682 (AQLEEGLDEVDLEANIARDKYARLRGQVE). Positions 1194–1205 (ERSESFSLEKRK) are enriched in basic and acidic residues. The interval 1194–1336 (ERSESFSLEK…PTHADSDWAS (143 aa)) is disordered. Residues 1213 to 1236 (TSTTPPGYLANQSAPATPQINRFN) are compositionally biased toward polar residues. Low complexity-rich tracts occupy residues 1253-1264 (PSLSSSALALRP) and 1272-1285 (PSLS…AGPS). The segment covering 1315–1327 (SRRRSILPQRRRP) has biased composition (basic residues).

Belongs to the protein kinase superfamily. Ser/Thr protein kinase family. CDC7 subfamily. Mg(2+) serves as cofactor.

It catalyses the reaction L-seryl-[protein] + ATP = O-phospho-L-seryl-[protein] + ADP + H(+). The enzyme catalyses L-threonyl-[protein] + ATP = O-phospho-L-threonyl-[protein] + ADP + H(+). Functionally, required for early events during cytokinesis including localization of cytoskeletal components to the cytokinetic ring. This Aspergillus niger (strain ATCC MYA-4892 / CBS 513.88 / FGSC A1513) protein is Cytokinesis protein sepH.